Here is a 514-residue protein sequence, read N- to C-terminus: Peptide chain release factor 3 (514 aa).

The tr-type G domain occupies 8–268; sequence KKRRTFAIIS…TFLEFAPEPH (261 aa). Residues 17-24, 85-89, and 139-142 each bind GTP; these read SHPDAGKT, DTPGH, and NKLD.

Belongs to the TRAFAC class translation factor GTPase superfamily. Classic translation factor GTPase family. PrfC subfamily.

Its subcellular location is the cytoplasm. Increases the formation of ribosomal termination complexes and stimulates activities of RF-1 and RF-2. It binds guanine nucleotides and has strong preference for UGA stop codons. It may interact directly with the ribosome. The stimulation of RF-1 and RF-2 is significantly reduced by GTP and GDP, but not by GMP. In Streptococcus pyogenes serotype M2 (strain MGAS10270), this protein is Peptide chain release factor 3.